The primary structure comprises 513 residues: Pantetheinase (513 aa).

The first 21 residues, 1–21, serve as a signal peptide directing secretion; it reads MTTQLPAYVAILLFYVSRASC. Residue asparagine 38 is glycosylated (N-linked (GlcNAc...) asparagine). The CN hydrolase domain occupies 39-306; sequence ATLTPVSREE…GKLLLSQLDS (268 aa). Glutamate 79 functions as the Proton acceptor in the catalytic mechanism. The N-linked (GlcNAc...) asparagine glycan is linked to asparagine 130. Lysine 178 (proton donor) is an active-site residue. A glycan (N-linked (GlcNAc...) asparagine) is linked at asparagine 200. The active-site Nucleophile is the cysteine 211. N-linked (GlcNAc...) asparagine glycosylation is found at asparagine 283, asparagine 315, and asparagine 353. The GPI-anchor amidated glycine moiety is linked to residue glycine 491. The propeptide at 492 to 513 is removed in mature form; it reads LTAQARIIMLIVIAPIVCSLSW.

This sequence belongs to the carbon-nitrogen hydrolase superfamily. BTD/VNN family. As to quaternary structure, monomer. In terms of tissue distribution, widely expressed with higher expression in spleen, kidney and blood. Overexpressed in lesional psoriatic skin.

It is found in the cell membrane. The catalysed reaction is (R)-pantetheine + H2O = cysteamine + (R)-pantothenate. In terms of biological role, amidohydrolase that hydrolyzes specifically one of the carboamide linkages in D-pantetheine thus recycling pantothenic acid (vitamin B5) and releasing cysteamine. This Homo sapiens (Human) protein is Pantetheinase (VNN1).